The following is a 359-amino-acid chain: DNA ligase (359 aa).

ATP contacts are provided by residues 32 to 35 (EIKY), arginine 39, 55 to 57 (RVS), and glutamate 93. Catalysis depends on lysine 34, which acts as the N6-AMP-lysine intermediate. Position 217 (glutamate 217) interacts with a divalent metal cation. ATP is bound by residues lysine 232 and lysine 238.

It belongs to the ATP-dependent DNA ligase family. A divalent metal cation is required as a cofactor.

The catalysed reaction is ATP + (deoxyribonucleotide)n-3'-hydroxyl + 5'-phospho-(deoxyribonucleotide)m = (deoxyribonucleotide)n+m + AMP + diphosphate.. In terms of biological role, DNA ligase that seals nicks in double-stranded DNA during DNA replication, DNA recombination and DNA repair in an ATP-dependent reaction. Binds specifically to DNA nicks containing a 3'-OH and a 5'-phosphate group. This chain is DNA ligase, found in Escherichia phage T7 (Bacteriophage T7).